The sequence spans 665 residues: Long chain acyl-CoA synthetase 2 (665 aa).

228 to 239 (IMYTSGTTGEPK) serves as a coordination point for ATP. The segment at 496 to 520 (DGWFHTGDIGEWQEDGSMKIIDRKK) is fatty acid-binding.

It belongs to the ATP-dependent AMP-binding enzyme family. Mg(2+) is required as a cofactor. In terms of tissue distribution, expressed along the entire length of the stem, but expression was not entirely epidermal specific, with some expression found in internal cell layers as well. Was expressed in leave epidermal cells, flowers (sepals, petals, stamens, filaments and carpel), siliques and developing seeds. In roots, expression was detected in an internal cell layer, probably the endodermal layer.

The protein localises to the endoplasmic reticulum. It catalyses the reaction a long-chain fatty acid + ATP + CoA = a long-chain fatty acyl-CoA + AMP + diphosphate. It participates in lipid metabolism; fatty acid metabolism. Its function is as follows. Activation of long-chain fatty acids for both synthesis of cellular lipids, and degradation via beta-oxidation. Acts in the cutin pathway. Preferentially uses palmitate, palmitoleate, oleate and linoleate. Required for repression of lateral root formation through its role in cutin biosynthesis and subsequent aerial tissues permeability. This is Long chain acyl-CoA synthetase 2 (LACS2) from Arabidopsis thaliana (Mouse-ear cress).